A 155-amino-acid polypeptide reads, in one-letter code: MRSIRIIAVGRLKTAHWKTAAEHYLTRLTRAFKVEETIIKDGNAALPPLERNAQEGARIVAALTPADLAVCMDETGRQFTSQQFSAFLTPMWENANLRPCFIIGGAYGLSDEVRGKARHTMALSAMTFPHEMARVVLYEQLYRADAILRGTPYHH.

Residues Gly-104 and 123-128 each bind S-adenosyl-L-methionine; that span reads LSAMTF.

The protein belongs to the RNA methyltransferase RlmH family. Homodimer.

It localises to the cytoplasm. The catalysed reaction is pseudouridine(1915) in 23S rRNA + S-adenosyl-L-methionine = N(3)-methylpseudouridine(1915) in 23S rRNA + S-adenosyl-L-homocysteine + H(+). Functionally, specifically methylates the pseudouridine at position 1915 (m3Psi1915) in 23S rRNA. In Oleidesulfovibrio alaskensis (strain ATCC BAA-1058 / DSM 17464 / G20) (Desulfovibrio alaskensis), this protein is Ribosomal RNA large subunit methyltransferase H.